Consider the following 418-residue polypeptide: Tyrosine--tRNA ligase (418 aa).

Residue Tyr-34 coordinates L-tyrosine. Residues 39–48 carry the 'HIGH' region motif; the sequence is PTADSLHLGH. 2 residues coordinate L-tyrosine: Tyr-169 and Gln-173. A 'KMSKS' region motif is present at residues 229-233; it reads KFGKS. Lys-232 is an ATP binding site. The S4 RNA-binding domain occupies 352 to 418; that stretch reads LNIVELLVNA…GKKKNFVLTY (67 aa).

It belongs to the class-I aminoacyl-tRNA synthetase family. TyrS type 1 subfamily. In terms of assembly, homodimer.

It is found in the cytoplasm. The catalysed reaction is tRNA(Tyr) + L-tyrosine + ATP = L-tyrosyl-tRNA(Tyr) + AMP + diphosphate + H(+). Functionally, catalyzes the attachment of tyrosine to tRNA(Tyr) in a two-step reaction: tyrosine is first activated by ATP to form Tyr-AMP and then transferred to the acceptor end of tRNA(Tyr). In Streptococcus thermophilus (strain ATCC BAA-491 / LMD-9), this protein is Tyrosine--tRNA ligase.